The primary structure comprises 566 residues: MDVENLIITTLKDKVEELTGNEMDIRLDEPPAINMGDYSTNISFRLAKDLKKAPKVIAEDIANSLNISGIEKIEAVNGYINFFMNYSDFSKETVSKIIDEKENFGKLEKRHEKVILEHTSANPNGPFHIGHGRNMVIGDSLKRILVASGYDVETQYYVNDMGRQEAIVVFGNEKFELDKSKKADHAIGEVYVETNKLLAENEELEQEILNLMKNYEEACEAGIENELTEKFKNAVDYSLGGFKETLSTLNIYHDKFVWESEFVKSGMVREVIKRLMDTGKVVEDEVFRLDLSDYGLEKKLVLARLNGTSLYSTRDIAYHINKMENCDFAVNLLGADHKLTAVMVNKTLALLGYNEAEVVFYEFISLPEGSMSTRRGRFISMDELFEEAKSRAAEEVRKRGVAESEEEIEEIAKKIAVGAVRYNIVRIAPEKPMVFRWDEALDFEKVGCPVIQYAHARCSRILENVEIISNDNLFAYEMNENEKTIVKLLSKLPKIVEKAAEVRKPQIVANYVLDVAQGFNKFYANCPVLKEENQIIKNSRIAIVNNTKMVLENTLDLLGIEMPGKM.

A 'HIGH' region motif is present at residues 121–131 (ANPNGPFHIGH).

It belongs to the class-I aminoacyl-tRNA synthetase family.

The protein localises to the cytoplasm. The catalysed reaction is tRNA(Arg) + L-arginine + ATP = L-arginyl-tRNA(Arg) + AMP + diphosphate. The polypeptide is Arginine--tRNA ligase (Methanococcus maripaludis (strain C7 / ATCC BAA-1331)).